A 597-amino-acid polypeptide reads, in one-letter code: Sulfite reductase [NADPH] flavoprotein alpha-component (597 aa).

One can recognise a Flavodoxin-like domain in the interval 62-200; it reads VTVLSASQTG…TADKWIQDVV (139 aa). FMN is bound by residues 68 to 73, 115 to 118, and 151 to 160; these read SQTGNA, STQG, and LGDTSYPNFC. In terms of domain architecture, FAD-binding FR-type spans 232 to 446; that stretch reads ENPYTAKLIT…VEPNDNFRLP (215 aa). Residues Thr-320, Asn-354, 384-387, 402-404, and 417-420 contribute to the FAD site; these read RLYS, SVG, and GVAS. NADP(+)-binding positions include 517–518, 523–527, and Asp-559; these read SR and KIYVQ. Tyr-597 contributes to the FAD binding site.

The protein belongs to the NADPH-dependent sulphite reductase flavoprotein subunit CysJ family. It in the N-terminal section; belongs to the flavodoxin family. This sequence in the C-terminal section; belongs to the flavoprotein pyridine nucleotide cytochrome reductase family. In terms of assembly, alpha(8)-beta(8). The alpha component is a flavoprotein, the beta component is a hemoprotein. FAD serves as cofactor. FMN is required as a cofactor.

The enzyme catalyses hydrogen sulfide + 3 NADP(+) + 3 H2O = sulfite + 3 NADPH + 4 H(+). It participates in sulfur metabolism; hydrogen sulfide biosynthesis; hydrogen sulfide from sulfite (NADPH route): step 1/1. Functionally, component of the sulfite reductase complex that catalyzes the 6-electron reduction of sulfite to sulfide. This is one of several activities required for the biosynthesis of L-cysteine from sulfate. The flavoprotein component catalyzes the electron flow from NADPH -&gt; FAD -&gt; FMN to the hemoprotein component. This chain is Sulfite reductase [NADPH] flavoprotein alpha-component, found in Mannheimia succiniciproducens (strain KCTC 0769BP / MBEL55E).